The chain runs to 617 residues: Na(+)/H(+) antiporter NhaA 1 (617 aa).

The disordered stretch occupies residues 1–26 (MTVTEPATQRGFPLLPSRLSRGSKAT). The tract at residues 1-433 (MTVTEPATQR…GWAIFRITDW (433 aa)) is na(+)/H(+) antiporter NhaA. Helical transmembrane passes span 33–53 (AAAL…SPWA), 75–95 (MTVK…IVGL), 113–133 (AVPV…FLAF), 141–161 (HAWG…LAII), 171–191 (LFLL…IAVL), 198–218 (VAPL…RYLP), 234–254 (IALY…ALLI), 304–324 (VSPV…AGVL), 341–361 (GIVA…TWLI), 378–398 (IAGG…IVDI), and 411–431 (IGVL…FRIT). The Thioredoxin domain maps to 434–617 (LSPPEPVGLK…LIRALEAGRG (184 aa)).

The protein in the N-terminal section; belongs to the NhaA Na(+)/H(+) (TC 2.A.33) antiporter family.

It localises to the cell membrane. The enzyme catalyses Na(+)(in) + 2 H(+)(out) = Na(+)(out) + 2 H(+)(in). Its function is as follows. Na(+)/H(+) antiporter that extrudes sodium in exchange for external protons. The protein is Na(+)/H(+) antiporter NhaA 1 of Mycolicibacterium gilvum (strain PYR-GCK) (Mycobacterium gilvum (strain PYR-GCK)).